A 93-amino-acid chain; its full sequence is Parbolysin P4 (93 aa).

Cystine bridges form between Cys-16-Cys-37, Cys-22-Cys-33, and Cys-47-Cys-60.

Belongs to the worm cytolysin family. In terms of tissue distribution, localized within the skin and proboscis and are most readily isolated from body mucus secretions.

The protein resides in the secreted. Cytolysin that shows hemolytic activity (on bovine erythrocytes, HC(50)=5.75 mg/ml). This hemolytic activity is completely inhibited by small unilamelar vesicles composed of PC/PG, PC/PI and PC/PS in 1:1 molar ratios (with at least 100 mg/ml concentration). The protein is Parbolysin P4 of Parborlasia corrugatus (Antarctic nemertean worm).